Consider the following 312-residue polypeptide: Ribosomal RNA small subunit methyltransferase H (312 aa).

Residues 35 to 37 (GGH), Asp55, Phe79, Asp101, and Gln108 each bind S-adenosyl-L-methionine. The tract at residues 286–306 (LKPSEHEVNENSRSRSSVLRV) is disordered. Basic and acidic residues predominate over residues 287–298 (KPSEHEVNENSR).

This sequence belongs to the methyltransferase superfamily. RsmH family.

The protein resides in the cytoplasm. It carries out the reaction cytidine(1402) in 16S rRNA + S-adenosyl-L-methionine = N(4)-methylcytidine(1402) in 16S rRNA + S-adenosyl-L-homocysteine + H(+). Functionally, specifically methylates the N4 position of cytidine in position 1402 (C1402) of 16S rRNA. The chain is Ribosomal RNA small subunit methyltransferase H from Aeromonas hydrophila subsp. hydrophila (strain ATCC 7966 / DSM 30187 / BCRC 13018 / CCUG 14551 / JCM 1027 / KCTC 2358 / NCIMB 9240 / NCTC 8049).